A 176-amino-acid chain; its full sequence is MEEQTTQSAADGQTAIELVTGPISDALKARGLPHELTGLDNRKIEIIKVEPEHLIAVARALYDDGFNYLACQCGFDEGPGDSLGSMYHLTKLSDSADRPPEVRIKVFLPRDNPRVPSVYWIWKTADWQERESFDMYGIIYEGHPNLIRILMPEDWVGWPMRKDYVTPDFYELQDAY.

The protein belongs to the complex I 30 kDa subunit family. In terms of assembly, NDH-1 can be composed of about 15 different subunits; different subcomplexes with different compositions have been identified which probably have different functions.

The protein localises to the cell inner membrane. It catalyses the reaction a plastoquinone + NADH + (n+1) H(+)(in) = a plastoquinol + NAD(+) + n H(+)(out). It carries out the reaction a plastoquinone + NADPH + (n+1) H(+)(in) = a plastoquinol + NADP(+) + n H(+)(out). Its function is as follows. NDH-1 shuttles electrons from an unknown electron donor, via FMN and iron-sulfur (Fe-S) centers, to quinones in the respiratory and/or the photosynthetic chain. The immediate electron acceptor for the enzyme in this species is believed to be plastoquinone. Couples the redox reaction to proton translocation, and thus conserves the redox energy in a proton gradient. Cyanobacterial NDH-1 also plays a role in inorganic carbon-concentration. The sequence is that of NAD(P)H-quinone oxidoreductase subunit J from Gloeobacter violaceus (strain ATCC 29082 / PCC 7421).